A 75-amino-acid polypeptide reads, in one-letter code: Small ribosomal subunit protein bS18 (75 aa).

The protein belongs to the bacterial ribosomal protein bS18 family. Part of the 30S ribosomal subunit. Forms a tight heterodimer with protein bS6.

In terms of biological role, binds as a heterodimer with protein bS6 to the central domain of the 16S rRNA, where it helps stabilize the platform of the 30S subunit. This chain is Small ribosomal subunit protein bS18, found in Thermosipho melanesiensis (strain DSM 12029 / CIP 104789 / BI429).